Consider the following 777-residue polypeptide: Beta-hexosaminidase (777 aa).

Positions 1-18 (MKRLTFGACICCLLSLMA) are cleaved as a signal peptide. Cys-19 is lipidated: N-palmitoyl cysteine. Cys-19 carries the S-diacylglycerol cysteine lipid modification. The region spanning 625–766 (APKPGLTIRT…VMIRLKGEEK (142 aa)) is the PA14 domain.

Belongs to the glycosyl hydrolase 20 family.

The protein localises to the cell outer membrane. The catalysed reaction is Hydrolysis of terminal non-reducing N-acetyl-D-hexosamine residues in N-acetyl-beta-D-hexosaminides.. This is Beta-hexosaminidase (nahA) from Porphyromonas gingivalis (strain ATCC BAA-308 / W83).